A 709-amino-acid chain; its full sequence is Elongation factor G (709 aa).

The 277-residue stretch at 10–286 folds into the tr-type G domain; sequence NKVRNIGIMA…AVVDFLPSPL (277 aa). Residues 19-26, 83-87, and 137-140 each bind GTP; these read AHIDAGKT, DTPGH, and NKMD.

This sequence belongs to the TRAFAC class translation factor GTPase superfamily. Classic translation factor GTPase family. EF-G/EF-2 subfamily.

The protein localises to the cytoplasm. Catalyzes the GTP-dependent ribosomal translocation step during translation elongation. During this step, the ribosome changes from the pre-translocational (PRE) to the post-translocational (POST) state as the newly formed A-site-bound peptidyl-tRNA and P-site-bound deacylated tRNA move to the P and E sites, respectively. Catalyzes the coordinated movement of the two tRNA molecules, the mRNA and conformational changes in the ribosome. The sequence is that of Elongation factor G from Corynebacterium glutamicum (strain R).